Here is a 512-residue protein sequence, read N- to C-terminus: D-alanine--D-alanyl carrier protein ligase (512 aa).

152–153 lines the ATP pocket; that stretch reads TS. D199 provides a ligand contact to D-alanine. 294-299 serves as a coordination point for ATP; that stretch reads NAYGPT. V303 contacts D-alanine. Residues D385, 397 to 400, and K499 contribute to the ATP site; that span reads YGGR. K499 contributes to the D-alanine binding site.

It belongs to the ATP-dependent AMP-binding enzyme family. DltA subfamily.

It is found in the cytoplasm. It carries out the reaction holo-[D-alanyl-carrier protein] + D-alanine + ATP = D-alanyl-[D-alanyl-carrier protein] + AMP + diphosphate. The protein operates within cell wall biogenesis; lipoteichoic acid biosynthesis. Its function is as follows. Catalyzes the first step in the D-alanylation of lipoteichoic acid (LTA), the activation of D-alanine and its transfer onto the D-alanyl carrier protein (Dcp) DltC. In an ATP-dependent two-step reaction, forms a high energy D-alanyl-AMP intermediate, followed by transfer of the D-alanyl residue as a thiol ester to the phosphopantheinyl prosthetic group of the Dcp. D-alanylation of LTA plays an important role in modulating the properties of the cell wall in Gram-positive bacteria, influencing the net charge of the cell wall. The sequence is that of D-alanine--D-alanyl carrier protein ligase from Streptococcus pyogenes serotype M1.